The chain runs to 213 residues: Kynurenine formamidase (213 aa).

Residue W15 coordinates substrate. The Zn(2+) site is built by H45, H49, and D51. Catalysis depends on H55, which acts as the Proton donor/acceptor. Residues H157 and E169 each coordinate Zn(2+).

It belongs to the Cyclase 1 superfamily. KynB family. In terms of assembly, homodimer. Zn(2+) is required as a cofactor.

It carries out the reaction N-formyl-L-kynurenine + H2O = L-kynurenine + formate + H(+). The protein operates within amino-acid degradation; L-tryptophan degradation via kynurenine pathway; L-kynurenine from L-tryptophan: step 2/2. In terms of biological role, catalyzes the hydrolysis of N-formyl-L-kynurenine to L-kynurenine, the second step in the kynurenine pathway of tryptophan degradation. The chain is Kynurenine formamidase from Deinococcus geothermalis (strain DSM 11300 / CIP 105573 / AG-3a).